The chain runs to 595 residues: Elongation factor 4 2 (595 aa).

The region spanning 4–187 (SHIRNFAIIA…AIKQRLPAPQ (184 aa)) is the tr-type G domain. GTP is bound by residues 16–21 (DHGKST) and 133–136 (NKVD).

The protein belongs to the TRAFAC class translation factor GTPase superfamily. Classic translation factor GTPase family. LepA subfamily.

The protein localises to the cell membrane. The catalysed reaction is GTP + H2O = GDP + phosphate + H(+). Required for accurate and efficient protein synthesis under certain stress conditions. May act as a fidelity factor of the translation reaction, by catalyzing a one-codon backward translocation of tRNAs on improperly translocated ribosomes. Back-translocation proceeds from a post-translocation (POST) complex to a pre-translocation (PRE) complex, thus giving elongation factor G a second chance to translocate the tRNAs correctly. Binds to ribosomes in a GTP-dependent manner. The chain is Elongation factor 4 2 from Lactiplantibacillus plantarum (strain ATCC BAA-793 / NCIMB 8826 / WCFS1) (Lactobacillus plantarum).